A 280-amino-acid chain; its full sequence is Phosphatidylglycerol--prolipoprotein diacylglyceryl transferase (280 aa).

The next 3 helical transmembrane spans lie at 15–35 (IFSI…IFAL), 60–80 (FIGL…PVFF), and 90–110 (IWEG…VLLF). Arg-138 serves as a coordination point for a 1,2-diacyl-sn-glycero-3-phospho-(1'-sn-glycerol). 2 helical membrane-spanning segments follow: residues 217–237 (MPFG…RIFL) and 257–277 (GQLL…NIYV).

It belongs to the Lgt family.

It is found in the cell membrane. The enzyme catalyses L-cysteinyl-[prolipoprotein] + a 1,2-diacyl-sn-glycero-3-phospho-(1'-sn-glycerol) = an S-1,2-diacyl-sn-glyceryl-L-cysteinyl-[prolipoprotein] + sn-glycerol 1-phosphate + H(+). The protein operates within protein modification; lipoprotein biosynthesis (diacylglyceryl transfer). In terms of biological role, catalyzes the transfer of the diacylglyceryl group from phosphatidylglycerol to the sulfhydryl group of the N-terminal cysteine of a prolipoprotein, the first step in the formation of mature lipoproteins. This chain is Phosphatidylglycerol--prolipoprotein diacylglyceryl transferase, found in Buchnera aphidicola subsp. Baizongia pistaciae (strain Bp).